A 450-amino-acid chain; its full sequence is uncharacterized protein (450 aa).

Positions 141–151 are enriched in basic and acidic residues; the sequence is WLDKTDGEKNS. Disordered stretches follow at residues 141-171, 276-298, and 395-416; these read WLDK…DSAG, LQDS…AVSQ, and DDED…LSRN. Positions 152 to 171 are enriched in polar residues; the sequence is EASSTDNSLENSTKGADSAG. The span at 283–298 shows a compositional bias: basic and acidic residues; it reads QGDKGEKESKDDAVSQ. The span at 395–411 shows a compositional bias: acidic residues; that stretch reads DDEDEDNVDNSEGDEES.

This is an uncharacterized protein from Saccharomyces cerevisiae (strain ATCC 204508 / S288c) (Baker's yeast).